The following is a 23-amino-acid chain: Conotoxin Tx6.5 (23 aa).

Intrachain disulfides connect C2/C10, C5/C15, and C9/C20. 4-hydroxyproline; partial is present on P12.

Belongs to the conotoxin U superfamily. Expressed by the venom duct.

Its subcellular location is the secreted. The protein is Conotoxin Tx6.5 of Conus textile (Cloth-of-gold cone).